Consider the following 100-residue polypeptide: UPF0213 protein YhbQ (100 aa).

The GIY-YIG domain maps to 2-77 (TPWFLYLIRT…KQLTKRQKER (76 aa)).

The protein belongs to the UPF0213 family.

This is UPF0213 protein YhbQ from Escherichia coli O17:K52:H18 (strain UMN026 / ExPEC).